Consider the following 426-residue polypeptide: Pannexin-1 (426 aa).

The Cytoplasmic segment spans residues 1 to 40 (MAIAHLATEYVFSDFLLKEPTEPKFKGLRLELAVDKMVTC). At C40 the chain carries S-nitrosocysteine. The helical transmembrane segment at 41–61 (IAVGLPLLLISLAFAQEISIG) threads the bilayer. Topologically, residues 62-106 (TQISCFSPSSFSWRQAAFVDSYCWAAVQQKSSLQSESGNLPLWLH) are extracellular. 2 disulfides stabilise this stretch: C66–C264 and C84–C245. Residues 107-127 (KFFPYILLLFAILLYLPALFW) form a helical membrane-spanning segment. The Cytoplasmic segment spans residues 128-216 (RFSAAPHLCS…HLIMKYISCR (89 aa)). Phosphotyrosine is present on Y198. A helical membrane pass occupies residues 217–237 (LVTFVVILLACIYLSYYFSLS). Topologically, residues 238–277 (SLSDEFLCSIKSGVLKNDSTIPDRFQCKLIAVGIFQLLSL) are extracellular. N254 carries N-linked (GlcNAc...) asparagine glycosylation. The helical transmembrane segment at 278–298 (INLIVYALLIPVVVYTFFIPF) threads the bilayer. At 299–426 (RQKTDILKVY…SRQRLLNPSC (128 aa)) the chain is on the cytoplasmic side. C346 carries the post-translational modification S-nitrosocysteine.

This sequence belongs to the pannexin family. Homoheptameric. S-nitrosylation inhibits channel currents and ATP release. Post-translationally, N-glycosylation may play a role in cell surface targeting. Exists in three glycosylation states: non-glycosylated (GLY0), high-mannose glycosylated (GLY1), and fully mature glycosylated (GLY2). In terms of processing, phosphorylated at Tyr-198 by SRC. Phosphorylation activates ATP release. Constitutively phosphorylated in vascular smooth muscle cells. Cleaved by CASP3 and CASP7 during apoptosis. Cleavage opens the channel for the release of metabolites and induces plasma membrane permeability during apoptosis. In terms of tissue distribution, widely expressed, including in cartilage, skin, spleen and brain.

It localises to the cell membrane. The protein resides in the endoplasmic reticulum membrane. The enzyme catalyses chloride(in) = chloride(out). The catalysed reaction is iodide(out) = iodide(in). It catalyses the reaction Ca(2+)(in) = Ca(2+)(out). It carries out the reaction ATP(in) = ATP(out). The enzyme catalyses K(+)(in) = K(+)(out). The catalysed reaction is Na(+)(in) = Na(+)(out). It catalyses the reaction nitrate(in) = nitrate(out). It carries out the reaction L-aspartate(out) = L-aspartate(in). The enzyme catalyses L-glutamate(out) = L-glutamate(in). The catalysed reaction is D-gluconate(in) = D-gluconate(out). It catalyses the reaction spermidine(in) = spermidine(out). Its function is as follows. Ion channel involved in a variety of physiological functions such as blood pressure regulation, apoptotic cell clearance and oogenesis. Forms anion-selective channels with relatively low conductance and an order of permeabilities: nitrate&gt;iodide&gt;chlroride&gt;&gt;aspartate=glutamate=gluconate. Can release ATP upon activation through phosphorylation or cleavage at C-terminus. May play a role as a Ca(2+)-leak channel to regulate ER Ca(2+) homeostasis. During apoptosis and after cleavage by caspases of the C-terminal tail, acts as a plasma membrane channel which mediates the regulated release of find-me signals, such as nucleotides ATP and UTP, and selective plasme membrane permeability. The sequence is that of Pannexin-1 from Mus musculus (Mouse).